The primary structure comprises 105 residues: Small ribosomal subunit protein uS10 (105 aa).

It belongs to the universal ribosomal protein uS10 family. Part of the 30S ribosomal subunit.

Functionally, involved in the binding of tRNA to the ribosomes. The protein is Small ribosomal subunit protein uS10 of Roseobacter denitrificans (strain ATCC 33942 / OCh 114) (Erythrobacter sp. (strain OCh 114)).